Consider the following 131-residue polypeptide: Small ribosomal subunit protein bS6 (131 aa).

The interval 100–131 (SPMVKAKDERRERREDFANETSDDADAGDSEE) is disordered. A compositionally biased stretch (basic and acidic residues) spans 104–116 (KAKDERRERREDF). The segment covering 120-131 (TSDDADAGDSEE) has biased composition (acidic residues).

Belongs to the bacterial ribosomal protein bS6 family.

In terms of biological role, binds together with bS18 to 16S ribosomal RNA. The sequence is that of Small ribosomal subunit protein bS6 from Erwinia tasmaniensis (strain DSM 17950 / CFBP 7177 / CIP 109463 / NCPPB 4357 / Et1/99).